A 305-amino-acid chain; its full sequence is tRNA-cytidine(32) 2-sulfurtransferase (305 aa).

The segment at 1 to 20 (MTAVLPLPQPLADPAPRDPR) is disordered. Residues 59–64 (SGGKDS) carry the PP-loop motif motif. Cys-134, Cys-137, and Cys-225 together coordinate [4Fe-4S] cluster. The segment at 282-305 (DAPSGLDPDPRAWLSAGHATHDSD) is disordered.

The protein belongs to the TtcA family. Homodimer. It depends on Mg(2+) as a cofactor. Requires [4Fe-4S] cluster as cofactor.

The protein localises to the cytoplasm. The catalysed reaction is cytidine(32) in tRNA + S-sulfanyl-L-cysteinyl-[cysteine desulfurase] + AH2 + ATP = 2-thiocytidine(32) in tRNA + L-cysteinyl-[cysteine desulfurase] + A + AMP + diphosphate + H(+). The protein operates within tRNA modification. Its function is as follows. Catalyzes the ATP-dependent 2-thiolation of cytidine in position 32 of tRNA, to form 2-thiocytidine (s(2)C32). The sulfur atoms are provided by the cysteine/cysteine desulfurase (IscS) system. The sequence is that of tRNA-cytidine(32) 2-sulfurtransferase from Xanthomonas axonopodis pv. citri (strain 306).